A 960-amino-acid polypeptide reads, in one-letter code: Gamma-aminobutyric acid type B receptor subunit 1 (960 aa).

The signal sequence occupies residues 1-19 (MLLLLLVPLFLRPLGAGGA). Residues 20–590 (QTPNVTSEGC…KTFRFLSQKL (571 aa)) lie on the Extracellular side of the membrane. N23 and N83 each carry an N-linked (GlcNAc...) asparagine glycan. Sushi domains lie at 29–95 (CQII…PSRC) and 97–158 (RICS…HCQV). Cystine bridges form between C99–C144, C130–C156, and C219–C245. 4 residues coordinate 4-aminobutanoate: S246, S269, H286, and Y366. C375 and C409 are disulfide-bonded. Residues N408 and N439 are each glycosylated (N-linked (GlcNAc...) asparagine). E465 lines the 4-aminobutanoate pocket. N-linked (GlcNAc...) asparagine glycosylation is found at N481, N501, and N513. Residues 591-611 (FISVSVLSSLGIVLAVVCLSF) form a helical membrane-spanning segment. Over 612 to 630 (NIYNSHVRYIQNSQPNLNN) the chain is Cytoplasmic. Residues 631–651 (LTAVGCSLALAAVFPLGLDGY) form a helical membrane-spanning segment. The Extracellular segment spans residues 652 to 666 (HIGRSQFPFVCQARL). A helical membrane pass occupies residues 667–687 (WLLGLGFSLGYGSMFTKIWWV). The Cytoplasmic segment spans residues 688–709 (HTVFTKKEEKKEWRKTLEPWKL). A helical transmembrane segment spans residues 710–730 (YATVGLLVGMDILTLAIWQIV). Topologically, residues 731–767 (DPLHRTIETFAKEEPKEDIDVSILPQLEHCSSKKMNT) are extracellular. Residues 768–788 (WLGIFYGYKGLLLLLGIFLAY) form a helical membrane-spanning segment. The Cytoplasmic portion of the chain corresponds to 789–803 (ETKSVSTEKINDHRA). Residues 804–824 (VGMAIYNVAVLCLITAPVTMI) form a helical membrane-spanning segment. The Extracellular portion of the chain corresponds to 825–832 (LSSQQDAA). A helical membrane pass occupies residues 833-853 (FAFASLAIVFSSYITLVVLFV). Residues 854-960 (PKMRRLITRG…DGSRVHLLYK (107 aa)) lie on the Cytoplasmic side of the membrane. 2 disordered regions span residues 866 to 891 (QSEA…RLLE) and 908 to 960 (VSEL…LLYK). Residues 867 to 879 (SEAQDTMKTGSST) show a composition bias toward polar residues. Residues 868-924 (EAQDTMKTGSSTNNNEEEKSRLLEKENRELEKIIAEKEERVSELRHQLQSRQQIRSR) are a coiled coil. T872 is modified (phosphothreonine). The interaction with ATF4 stretch occupies residues 887–915 (SRLLEKENRELEKIIAEKEERVSELRHQL). At T929 the chain carries Phosphothreonine.

Belongs to the G-protein coupled receptor 3 family. GABA-B receptor subfamily. In terms of assembly, heterodimer of GABBR1 and GABBR2. Homodimers may form, but are inactive. Interacts (via C-terminus) with ATF4 (via leucine zipper domain). Interacts with JAKMIP1. Interacts with KCTD8, KCTD12, KCTD12B and KCTD16; this interaction determines the pharmacology and kinetics of the receptor response, the KCTD proteins markedly accelerating the GABA-B response, although to different extents. Expressed in neuronal tissue including cortex, cerebellum and spinal cord. Not detected in non-neuronal tissues including heart, liver, spleen and kidney.

The protein localises to the cell membrane. It is found in the postsynaptic cell membrane. The protein resides in the cell projection. Its subcellular location is the dendrite. Functionally, component of a heterodimeric G-protein coupled receptor for GABA, formed by GABBR1 and GABBR2. Within the heterodimeric GABA receptor, only GABBR1 seems to bind agonists, while GABBR2 mediates coupling to G proteins. Ligand binding causes a conformation change that triggers signaling via guanine nucleotide-binding proteins (G proteins) and modulates the activity of down-stream effectors, such as adenylate cyclase. Signaling inhibits adenylate cyclase, stimulates phospholipase A2, activates potassium channels, inactivates voltage-dependent calcium-channels and modulates inositol phospholipid hydrolysis. Calcium is required for high affinity binding to GABA. Plays a critical role in the fine-tuning of inhibitory synaptic transmission. Pre-synaptic GABA receptor inhibits neurotransmitter release by down-regulating high-voltage activated calcium channels, whereas postsynaptic GABA receptor decreases neuronal excitability by activating a prominent inwardly rectifying potassium (Kir) conductance that underlies the late inhibitory postsynaptic potentials. Not only implicated in synaptic inhibition but also in hippocampal long-term potentiation, slow wave sleep, muscle relaxation and antinociception. In Mus musculus (Mouse), this protein is Gamma-aminobutyric acid type B receptor subunit 1 (Gabbr1).